The chain runs to 294 residues: Shikimate dehydrogenase (NADP(+)) (294 aa).

Residues 22–24 and S69 contribute to the shikimate site; that span reads SLS. Catalysis depends on K73, which acts as the Proton acceptor. 2 residues coordinate shikimate: N94 and D111. Residues 135–139 and L236 each bind NADP(+); that span reads GAGGA. Y238 contributes to the shikimate binding site. An NADP(+)-binding site is contributed by G260.

The protein belongs to the shikimate dehydrogenase family. In terms of assembly, homodimer.

It carries out the reaction shikimate + NADP(+) = 3-dehydroshikimate + NADPH + H(+). It participates in metabolic intermediate biosynthesis; chorismate biosynthesis; chorismate from D-erythrose 4-phosphate and phosphoenolpyruvate: step 4/7. In terms of biological role, involved in the biosynthesis of the chorismate, which leads to the biosynthesis of aromatic amino acids. Catalyzes the reversible NADPH linked reduction of 3-dehydroshikimate (DHSA) to yield shikimate (SA). The sequence is that of Shikimate dehydrogenase (NADP(+)) from Streptococcus equi subsp. zooepidemicus (strain MGCS10565).